Reading from the N-terminus, the 893-residue chain is Translation initiation factor IF-2 (893 aa).

A disordered region spans residues 1 to 266; sequence MVDTKNPGDK…AKPAPSKQRG (266 aa). Residues 59–70 are compositionally biased toward low complexity; sequence PADAPTAAAAAP. Residues 71 to 92 show a composition bias toward pro residues; that stretch reads APAPAPVPSAAPRPAAPPPPSR. A compositionally biased stretch (low complexity) spans 93–104; that stretch reads PQQSRSQSPSRS. Basic and acidic residues-rich tracts occupy residues 128 to 148 and 155 to 196; these read ARVR…RRNS and AERE…EAKR. Over residues 197–226 the composition is skewed to low complexity; sequence PAAAATPAKSATPAARPTGAPAVRAPGVAA. The tr-type G domain maps to 389–560; that stretch reads PRSPVVTVMG…ALQAELLDLK (172 aa). The tract at residues 398–405 is G1; the sequence is GHVDHGKT. Residue 398–405 coordinates GTP; the sequence is GHVDHGKT. Positions 423–427 are G2; that stretch reads GITQH. Positions 446-449 are G3; sequence DTPG. Residues 446–450 and 500–503 contribute to the GTP site; these read DTPGH and NKID. A G4 region spans residues 500-503; the sequence is NKID. The G5 stretch occupies residues 536–538; the sequence is SAK.

This sequence belongs to the TRAFAC class translation factor GTPase superfamily. Classic translation factor GTPase family. IF-2 subfamily.

It localises to the cytoplasm. One of the essential components for the initiation of protein synthesis. Protects formylmethionyl-tRNA from spontaneous hydrolysis and promotes its binding to the 30S ribosomal subunits. Also involved in the hydrolysis of GTP during the formation of the 70S ribosomal complex. The protein is Translation initiation factor IF-2 of Rhodopseudomonas palustris (strain BisA53).